The primary structure comprises 807 residues: Anaphase-promoting complex subunit 4 (807 aa).

Tyr-469 bears the Phosphotyrosine mark. Residues 755 to 788 (DESSDDEEEAGGKPVKIKEEVLSESETEAHQDAA) are disordered. 2 positions are modified to phosphoserine: Ser-757 and Ser-758. Residues 770–785 (KIKEEVLSESETEAHQ) show a composition bias toward basic and acidic residues. Lys-772 is covalently cross-linked (Glycyl lysine isopeptide (Lys-Gly) (interchain with G-Cter in SUMO2)). Ser-777 and Ser-779 each carry phosphoserine. A Glycyl lysine isopeptide (Lys-Gly) (interchain with G-Cter in SUMO2) cross-link involves residue Lys-797.

Belongs to the APC4 family. The mammalian APC/C is composed at least of 14 distinct subunits ANAPC1, ANAPC2, CDC27/APC3, ANAPC4, ANAPC5, CDC16/APC6, ANAPC7, CDC23/APC8, ANAPC10, ANAPC11, CDC26/APC12, ANAPC13, ANAPC15 and ANAPC16 that assemble into a complex of at least 19 chains with a combined molecular mass of around 1.2 MDa; APC/C interacts with FZR1 and FBXO5. In the context of the APC/C complex, directly interacts with UBE2S. Interacts with FBXO43.

The protein resides in the nucleus. It participates in protein modification; protein ubiquitination. Component of the anaphase promoting complex/cyclosome (APC/C), a cell cycle-regulated E3 ubiquitin ligase that controls progression through mitosis and the G1 phase of the cell cycle. The APC/C complex acts by mediating ubiquitination and subsequent degradation of target proteins: it mainly mediates the formation of 'Lys-11'-linked polyubiquitin chains and, to a lower extent, the formation of 'Lys-48'- and 'Lys-63'-linked polyubiquitin chains. The APC/C complex catalyzes assembly of branched 'Lys-11'-/'Lys-48'-linked branched ubiquitin chains on target proteins. In Mus musculus (Mouse), this protein is Anaphase-promoting complex subunit 4 (Anapc4).